Consider the following 1221-residue polypeptide: Deubiquitinating protein VCPIP1 (1221 aa).

Over residues 1 to 19 (MSQPPPPPPLPPPPPPPEA) the composition is skewed to pro residues. The interval 1–40 (MSQPPPPPPLPPPPPPPEAPQTSSSLAAAATPGGLSKRRD) is disordered. Residues 207–360 (LIPVHVDGDG…RNHYIPLVGI (154 aa)) form the OTU domain. The active site involves Asp-215. Cys-218 (nucleophile) is an active-site residue. His-353 is an active-site residue. N6-acetyllysine is present on Lys-407. Disordered stretches follow at residues 724–778 (SVMQ…KIRI) and 988–1009 (EATT…GSGG). Ser-746 and Ser-756 each carry phosphoserine. Positions 754-770 (PSSAPATPTKAPYSPTT) are enriched in low complexity. At Thr-762 the chain carries Phosphothreonine. A phosphoserine mark is found at Ser-767, Ser-993, Ser-997, and Ser-1076. Disordered stretches follow at residues 1117-1177 (ASMD…TDSR) and 1189-1221 (RSKA…MDHS). The segment covering 1143-1156 (VSSSVRPGNLQTGL) has biased composition (polar residues). Over residues 1162-1173 (LTGGTENLNTET) the composition is skewed to low complexity. A phosphoserine mark is found at Ser-1197 and Ser-1206. Acidic residues predominate over residues 1198-1208 (MEEPEEMDSQD). The span at 1209-1221 (AETTNTTEPMDHS) shows a compositional bias: polar residues.

As to quaternary structure, binds VCP and the ternary complex containing STX5A, NSFL1C and VCP. Phosphorylated at Ser-1206 by ATM or ATR following induction of covalent DNA-protein cross-links (DPCs). As to expression, widely expressed.

Its subcellular location is the nucleus. It localises to the cytoplasm. The protein localises to the endoplasmic reticulum. It is found in the golgi apparatus. The protein resides in the golgi stack. It catalyses the reaction Thiol-dependent hydrolysis of ester, thioester, amide, peptide and isopeptide bonds formed by the C-terminal Gly of ubiquitin (a 76-residue protein attached to proteins as an intracellular targeting signal).. Functionally, deubiquitinating enzyme involved in DNA repair and reassembly of the Golgi apparatus and the endoplasmic reticulum following mitosis. Necessary for VCP-mediated reassembly of Golgi stacks after mitosis. Plays a role in VCP-mediated formation of transitional endoplasmic reticulum (tER). Mediates dissociation of the ternary complex containing STX5A, NSFL1C and VCP. Also involved in DNA repair following phosphorylation by ATM or ATR: acts by catalyzing deubiquitination of SPRTN, thereby promoting SPRTN recruitment to chromatin and subsequent proteolytic cleavage of covalent DNA-protein cross-links (DPCs). Hydrolyzes 'Lys-11'- and 'Lys-48'-linked polyubiquitin chains. This is Deubiquitinating protein VCPIP1 from Rattus norvegicus (Rat).